Consider the following 272-residue polypeptide: Phosphatidylglycerol--prolipoprotein diacylglyceryl transferase (272 aa).

4 helical membrane-spanning segments follow: residues 24-44 (WYALAYIAGLVIGWAYARHLV), 64-84 (LLVYTALGVILGGRLGYVVFY), 99-119 (LWQGGMSFHGGLVGAGVGVML), and 125-145 (GLPTLALGDIVSAVAPIGLFL). Arg147 serves as a coordination point for a 1,2-diacyl-sn-glycero-3-phospho-(1'-sn-glycerol). 3 helical membrane-spanning segments follow: residues 185-205 (AAAEGALLFLLLFVAVRLGAL), 209-229 (GLVTGLFAIGYGCARILCEFF), and 245-265 (MGMLLSLPLIAAGLALVAFAY).

Belongs to the Lgt family.

The protein resides in the cell inner membrane. It catalyses the reaction L-cysteinyl-[prolipoprotein] + a 1,2-diacyl-sn-glycero-3-phospho-(1'-sn-glycerol) = an S-1,2-diacyl-sn-glyceryl-L-cysteinyl-[prolipoprotein] + sn-glycerol 1-phosphate + H(+). Its pathway is protein modification; lipoprotein biosynthesis (diacylglyceryl transfer). Catalyzes the transfer of the diacylglyceryl group from phosphatidylglycerol to the sulfhydryl group of the N-terminal cysteine of a prolipoprotein, the first step in the formation of mature lipoproteins. The polypeptide is Phosphatidylglycerol--prolipoprotein diacylglyceryl transferase (Methylocella silvestris (strain DSM 15510 / CIP 108128 / LMG 27833 / NCIMB 13906 / BL2)).